The following is a 337-amino-acid chain: Ribosomal RNA small subunit methyltransferase H (337 aa).

Residues 45–47 (GGH), Asp64, Phe91, Asp120, and Gln127 each bind S-adenosyl-L-methionine.

This sequence belongs to the methyltransferase superfamily. RsmH family.

Its subcellular location is the cytoplasm. The enzyme catalyses cytidine(1402) in 16S rRNA + S-adenosyl-L-methionine = N(4)-methylcytidine(1402) in 16S rRNA + S-adenosyl-L-homocysteine + H(+). Specifically methylates the N4 position of cytidine in position 1402 (C1402) of 16S rRNA. This Corynebacterium glutamicum (strain R) protein is Ribosomal RNA small subunit methyltransferase H.